The chain runs to 1457 residues: ABC transporter G family member 36 (1457 aa).

Residues 14-43 (RLGGSMRGDSGSMWRRGDDVFSRSSREEDD) are disordered. The span at 28–39 (RRGDDVFSRSSR) shows a compositional bias: basic and acidic residues. Residues 164 to 437 (GNALGILPNR…FESTGFKCPD (274 aa)) form the ABC transporter 1 domain. Position 197-204 (197-204 (GPPGSGKT)) interacts with ATP. The 214-residue stretch at 515-728 (ELLKANIDRE…AQNAISVNEL (214 aa)) folds into the ABC transmembrane type-2 1 domain. The next 7 helical transmembrane spans lie at 533-553 (FVYM…MTLF), 565-585 (SGGI…FNGF), 621-641 (IPIT…VIGF), 653-673 (LLML…GGAA), 677-697 (IVAN…GGFI), 706-726 (WWIW…ISVN), and 765-785 (IGFG…TLAL). Residues 821 to 841 (SSGSTRRPMGNGTENDSTIVD) form a disordered region. Residues 860-1112 (LSFDNVRYSV…ELIKYFESIP (253 aa)) form the ABC transporter 2 domain. 905–912 (GVSGAGKT) contacts ATP. An ABC transmembrane type-2 2 domain is found at 1185–1399 (TQCMACLWKQ…TLYGLVVSQF (215 aa)). A run of 7 helical transmembrane segments spans residues 1209 to 1229 (FFFT…LGGK), 1244 to 1264 (YAAV…VVAV), 1292 to 1312 (IPYT…MIGF), 1319 to 1339 (FFWY…YGMM), 1349 to 1369 (IASI…GFVI), 1380 to 1400 (WYCW…SQFG), and 1429 to 1449 (WVAT…GFAI).

This sequence belongs to the ABC transporter superfamily. ABCG family. PDR (TC 3.A.1.205) subfamily.

The protein localises to the membrane. Its function is as follows. May be a general defense protein. The polypeptide is ABC transporter G family member 36 (Oryza sativa subsp. indica (Rice)).